A 745-amino-acid chain; its full sequence is Elongation factor G, mitochondrial (745 aa).

The 278-residue stretch at 40 to 317 folds into the tr-type G domain; the sequence is EKIRNIGISA…AVLDYLPNPG (278 aa). Residues 49–56, 116–120, and 170–173 each bind GTP; these read AHIDSGKT, DTPGH, and NKLD.

Belongs to the TRAFAC class translation factor GTPase superfamily. Classic translation factor GTPase family. EF-G/EF-2 subfamily.

It localises to the mitochondrion. It functions in the pathway protein biosynthesis; polypeptide chain elongation. In terms of biological role, mitochondrial GTPase that catalyzes the GTP-dependent ribosomal translocation step during translation elongation. During this step, the ribosome changes from the pre-translocational (PRE) to the post-translocational (POST) state as the newly formed A-site-bound peptidyl-tRNA and P-site-bound deacylated tRNA move to the P and E sites, respectively. Catalyzes the coordinated movement of the two tRNA molecules, the mRNA and conformational changes in the ribosome. Essential during development as it acts as a retrograde signal from mitochondria to the nucleus to slow down cell proliferation if mitochondrial energy output is low. This is Elongation factor G, mitochondrial from Drosophila willistoni (Fruit fly).